The primary structure comprises 286 residues: Translocon-associated protein subunit alpha (286 aa).

Residues 1–21 (MRLLPRLLLLFLLAFPAAVLL) form the signal peptide. The Lumenal segment spans residues 22–207 (RGGPGGSLAL…EREDGLDGET (186 aa)). Acidic residues predominate over residues 46-75 (IIEDEDDEAEVEEDEPTDLAEDKEEEDVSS). The disordered stretch occupies residues 46–83 (IIEDEDDEAEVEEDEPTDLAEDKEEEDVSSEPEASPSA). N-linked (GlcNAc...) asparagine glycans are attached at residues N136 and N191. The chain crosses the membrane as a helical span at residues 208–228 (IFMYMFLAGLGLLVVVGLHQL). Residues 229–286 (LESRKRKRPIQKVEMGTSSQNDVDMSWIPQETLNQINKASPRRQPRKRAQKRSVGSDE) are Cytoplasmic-facing. The tract at residues 236-286 (RPIQKVEMGTSSQNDVDMSWIPQETLNQINKASPRRQPRKRAQKRSVGSDE) is disordered. The span at 244 to 266 (GTSSQNDVDMSWIPQETLNQINK) shows a compositional bias: polar residues. At S247 the chain carries Phosphoserine. T260 is modified (phosphothreonine). Position 268 is a phosphoserine (S268). Positions 268–279 (SPRRQPRKRAQK) are enriched in basic residues.

Belongs to the TRAP-alpha family. Heterotetramer of TRAP-alpha, TRAP-beta, TRAP-delta and TRAP-gamma. Interacts with palmitoylated calnexin (CALX), the interaction is required for efficient folding of glycosylated proteins.

It is found in the endoplasmic reticulum membrane. Its function is as follows. TRAP proteins are part of a complex whose function is to bind calcium to the ER membrane and thereby regulate the retention of ER resident proteins. May be involved in the recycling of the translocation apparatus after completion of the translocation process or may function as a membrane-bound chaperone facilitating folding of translocated proteins. This is Translocon-associated protein subunit alpha (Ssr1) from Mus musculus (Mouse).